The following is a 1507-amino-acid chain: ABC multidrug transporter SNQ2 (1507 aa).

The disordered stretch occupies residues 1–73 (MSSSSEISVA…RSSTAELSPE (73 aa)). The span at 41–55 (RSHEDADGDDAHSDN) shows a compositional bias: basic and acidic residues. 2 N-linked (GlcNAc...) asparagine glycosylation sites follow: asparagine 55 and asparagine 336. An ABC transporter 1 domain is found at 157 to 412 (CLPYTIYKAI…FYRMGYECPP (256 aa)). The next 3 helical transmembrane spans lie at 522–542 (AYTVITICSAIIQSLVSGSLY), 556–576 (GGVLYFCLLYYSLMGLANLSF), and 605–625 (FPFRMIGMTCFLIIIYFLSGL). The N-linked (GlcNAc...) asparagine glycan is linked to asparagine 626. Residues 635-655 (VYLFLTMCSESINALFELIAA) form a helical membrane-spanning segment. A glycan (N-linked (GlcNAc...) asparagine) is linked at asparagine 659. Transmembrane regions (helical) follow at residues 665 to 685 (SISGIVMMSISLYSTYMIQLP) and 773 to 793 (FGIMWCFLLGYIALKALITEI). Residues 857–1099 (FIWRNVCYTI…LLSYFERNGA (243 aa)) enclose the ABC transporter 2 domain. N-linked (GlcNAc...) asparagine glycosylation is present at asparagine 878. Residue 893 to 900 (GESGAGKT) coordinates ATP. The next 3 membrane-spanning stretches (helical) occupy residues 1193–1213 (YIMSKMMLMTVGGLYIGFTFY), 1220–1240 (TGLQNTLFAAFISIILSAPAM), and 1270–1290 (LITQYLSEIPYHFLFSAIFFV). N-linked (GlcNAc...) asparagine glycosylation occurs at asparagine 1311. 2 consecutive transmembrane segments (helical) span residues 1314-1334 (IMFQLYYIGFGLCVLYMAPNL) and 1339-1359 (VILGLCLSFLIAFCGVVQPVS). N-linked (GlcNAc...) asparagine glycosylation occurs at asparagine 1428. The chain crosses the membrane as a helical span at residues 1459–1479 (FGLYWAYIGFNICAMVAIYYI).

It belongs to the ABC transporter superfamily. ABCG family. PDR (TC 3.A.1.205) subfamily.

The protein resides in the cell membrane. ABC multidrug transporter involved in the response to azoles such as fluconazole, itraconazole, ketoconazole and voriconazole and contributes to the development of PDR1-dependent azole resistance. Plays a role in biofilm tolerance to fluconazole. Also confers resistance to 4-nitroquinoline-N-oxide (4-NQO). This Candida glabrata (strain ATCC 2001 / BCRC 20586 / JCM 3761 / NBRC 0622 / NRRL Y-65 / CBS 138) (Yeast) protein is ABC multidrug transporter SNQ2.